Here is a 307-residue protein sequence, read N- to C-terminus: Methionyl-tRNA formyltransferase (307 aa).

A (6S)-5,6,7,8-tetrahydrofolate-binding site is contributed by 110-113; the sequence is SLLP.

Belongs to the Fmt family.

It catalyses the reaction L-methionyl-tRNA(fMet) + (6R)-10-formyltetrahydrofolate = N-formyl-L-methionyl-tRNA(fMet) + (6S)-5,6,7,8-tetrahydrofolate + H(+). In terms of biological role, attaches a formyl group to the free amino group of methionyl-tRNA(fMet). The formyl group appears to play a dual role in the initiator identity of N-formylmethionyl-tRNA by promoting its recognition by IF2 and preventing the misappropriation of this tRNA by the elongation apparatus. This Rhodococcus erythropolis (strain PR4 / NBRC 100887) protein is Methionyl-tRNA formyltransferase.